Reading from the N-terminus, the 289-residue chain is ATP synthase mitochondrial F1 complex assembly factor 2 (289 aa).

The N-terminal 40 residues, 1-40 (MWRSCLRLRDGGRRLLNRPAGGPSASMSPGPTIPSPARAY), are a transit peptide targeting the mitochondrion. Residues 13 to 40 (RRLLNRPAGGPSASMSPGPTIPSPARAY) are disordered. The residue at position 133 (Lys-133) is an N6-succinyllysine.

The protein belongs to the ATP12 family. As to quaternary structure, interacts with ATP5F1B; involved in the assembly of the F1 component of the mitochondrial ATP synthase (ATPase). Interacts with FMC1. In terms of tissue distribution, widely expressed.

Its subcellular location is the mitochondrion inner membrane. Plays a role in the assembly of the F1 component of the mitochondrial ATP synthase (ATPase). This Homo sapiens (Human) protein is ATP synthase mitochondrial F1 complex assembly factor 2.